Reading from the N-terminus, the 1047-residue chain is [F-actin]-monooxygenase MICAL1 (1047 aa).

The segment at 1-489 is monooxygenase domain; the sequence is MASPTSTNPA…QDLYDIMDKE (489 aa). Residues Cys95, 114-116, 121-123, Phe181, Tyr293, and Asp393 each bind FAD; these read EKR and RHN. Residue Thr475 is modified to Phosphothreonine. Residues 507–611 form the Calponin-homology (CH) domain; sequence SAGTEELLHW…YLSHFHSAFK (105 aa). Ser616 carries the phosphoserine modification. The segment at 644-672 is disordered; that stretch reads RTKVEEETPCTEEPPVSEPSVPPALPSEH. The span at 659 to 668 shows a compositional bias: pro residues; that stretch reads VSEPSVPPAL. Residues 679-741 enclose the LIM zinc-binding domain; it reads DVCELCGKRL…LQHLPQEDQK (63 aa). Zn(2+) contacts are provided by Cys681, Cys684, His702, Cys705, Cys708, Cys711, Cys731, and His734. Disordered regions lie at residues 739-787 and 849-872; these read DQKE…QPAR and EKGE…PPPL. Residues 745–767 show a composition bias toward polar residues; that stretch reads NNGSPENQELPTPGDSTTQSGPS. Phosphoserine is present on residues Ser777 and Ser781. Over residues 851–868 the composition is skewed to acidic residues; sequence GEEEEEEEEEEEEEEEEL. The 143-residue stretch at 905-1047 folds into the bMERB domain; that stretch reads KEEEMKRFCK…EERRLREMPV (143 aa). The stretch at 912–996 forms a coiled coil; sequence FCKAQAIQRR…LEEKQRQLDH (85 aa).

The protein belongs to the Mical family. Interacts with STK38 and STK38L. Associates with the SH3 domain of NEDD9. Interacts with VIM and PLXNA3. Interacts with RAB1B, RAB8A, RAB10, RAB13 and RAB15 (in their GTP-bound forms); binding to RAB1B is of low affinity compared to other Rab proteins; at least in case of RAB8A and RAB10 can bind 2 molecules of the Rab proteins simultaneously. Interacts with GRAF1/ARHGAP26, GRAF2/ARHGAP10, RAB8A, RAB8B and RAB10; may bind simultaneously to GRAFs and Rabs and connects GRAFs to Rabs. Does not interact with RAB1 and RAB11A. FAD serves as cofactor.

It localises to the cytoplasm. Its subcellular location is the cytoskeleton. The protein localises to the endosome membrane. It is found in the midbody. The catalysed reaction is L-methionyl-[F-actin] + NADPH + O2 + H(+) = L-methionyl-(R)-S-oxide-[F-actin] + NADP(+) + H2O. The enzyme catalyses NADPH + O2 + H(+) = H2O2 + NADP(+). In terms of biological role, monooxygenase that promotes depolymerization of F-actin by mediating oxidation of specific methionine residues on actin to form methionine-sulfoxide, resulting in actin filament disassembly and preventing repolymerization. In the absence of actin, it also functions as a NADPH oxidase producing H(2)O(2). Acts as a cytoskeletal regulator that connects NEDD9 to intermediate filaments. Also acts as a negative regulator of apoptosis via its interaction with STK38 and STK38L; acts by antagonizing STK38 and STK38L activation by MST1/STK4. Involved in regulation of lamina-specific connectivity in the nervous system such as the development of lamina-restricted hippocampal connections. Through redox regulation of the actin cytoskeleton controls the intracellular distribution of secretory vesicles containing L1/neurofascin/NgCAM family proteins in neurons, thereby regulating their cell surface levels. May act as Rab effector protein and play a role in vesicle trafficking. Promotes endosomal tubule extension by associating with RAB8 (RAB8A or RAB8B), RAB10 and GRAF (GRAF1/ARHGAP26 or GRAF2/ARHGAP10) on the endosomal membrane which may connect GRAFs to Rabs, thereby participating in neosynthesized Rab8-Rab10-Rab11-dependent protein export. This is [F-actin]-monooxygenase MICAL1 (Mical1) from Rattus norvegicus (Rat).